The primary structure comprises 99 residues: CLAVATA3/ESR (CLE)-related protein 17 (99 aa).

The N-terminal stretch at 1-21 is a signal peptide; the sequence is MTHVLVRRQGQGKKRRWDVNM. The span at 77 to 89 shows a compositional bias: basic and acidic residues; the sequence is LSRDDIYGDDKRV. The tract at residues 77–99 is disordered; the sequence is LSRDDIYGDDKRVVHTGPNPLHN. Residue Pro94 is modified to Hydroxyproline. A glycan (O-linked (Ara...) hydroxyproline) is linked at Pro94.

It belongs to the CLV3/ESR signal peptide family. Post-translationally, the O-glycosylation (arabinosylation) of the hydroxyproline Pro-94 enhances binding affinity of the CLE17p peptide for its receptor. As to expression, mostly expressed in seedlings, roots, flowers, stems and apex, and, to a lower extent, in leaves and siliques.

The protein localises to the secreted. Its subcellular location is the extracellular space. In terms of biological role, extracellular signal peptide that regulates cell fate. Represses root apical meristem maintenance. Regulates the transition of protophloem cells from proliferation to differentiation, thus impinging on postembryonic growth capacity of the root meristem; this signaling pathway requires CRN and CLV2. In Arabidopsis thaliana (Mouse-ear cress), this protein is CLAVATA3/ESR (CLE)-related protein 17.